Here is a 237-residue protein sequence, read N- to C-terminus: Cytochrome c oxidase subunit 2 (237 aa).

Over 1 to 30 (MNLVAPTPWGLFFQDSATPQMEGIEELHNN) the chain is Mitochondrial intermembrane. A helical membrane pass occupies residues 31–51 (IMFYLTIILFSVTWMMITIIK). The Mitochondrial matrix segment spans residues 52 to 67 (SFVNTKSPISHKYMNH). Residues 68–94 (GTLIELIWTITPAVILILIAFPSFKLL) form a helical membrane-spanning segment. Residues 95–237 (YLMDEVMDPS…SVSLKNFYYD (143 aa)) lie on the Mitochondrial intermembrane side of the membrane. Residues His176, Cys211, Glu213, Cys215, His219, and Met222 each contribute to the Cu cation site. Glu213 provides a ligand contact to Mg(2+).

The protein belongs to the cytochrome c oxidase subunit 2 family. As to quaternary structure, component of the cytochrome c oxidase (complex IV, CIV), a multisubunit enzyme composed of a catalytic core of 3 subunits and several supernumerary subunits. The complex exists as a monomer or a dimer and forms supercomplexes (SCs) in the inner mitochondrial membrane with ubiquinol-cytochrome c oxidoreductase (cytochrome b-c1 complex, complex III, CIII). Cu cation is required as a cofactor.

It localises to the mitochondrion inner membrane. The catalysed reaction is 4 Fe(II)-[cytochrome c] + O2 + 8 H(+)(in) = 4 Fe(III)-[cytochrome c] + 2 H2O + 4 H(+)(out). Its function is as follows. Component of the cytochrome c oxidase, the last enzyme in the mitochondrial electron transport chain which drives oxidative phosphorylation. The respiratory chain contains 3 multisubunit complexes succinate dehydrogenase (complex II, CII), ubiquinol-cytochrome c oxidoreductase (cytochrome b-c1 complex, complex III, CIII) and cytochrome c oxidase (complex IV, CIV), that cooperate to transfer electrons derived from NADH and succinate to molecular oxygen, creating an electrochemical gradient over the inner membrane that drives transmembrane transport and the ATP synthase. Cytochrome c oxidase is the component of the respiratory chain that catalyzes the reduction of oxygen to water. Electrons originating from reduced cytochrome c in the intermembrane space (IMS) are transferred via the dinuclear copper A center (CU(A)) of subunit 2 and heme A of subunit 1 to the active site in subunit 1, a binuclear center (BNC) formed by heme A3 and copper B (CU(B)). The BNC reduces molecular oxygen to 2 water molecules using 4 electrons from cytochrome c in the IMS and 4 protons from the mitochondrial matrix. This is Cytochrome c oxidase subunit 2 (COX2) from Trichophyton rubrum (Athlete's foot fungus).